We begin with the raw amino-acid sequence, 241 residues long: Neuroendocrine secretory protein 55 (241 aa).

The signal sequence occupies residues 1–46 (MDRRSRPQLGRRARHNYNDLCPPIGRRAATALLWLSCSIALLRALA). Residues 71-241 (AAQVFPEPPE…KRGAIPIRRH (171 aa)) are disordered. The segment covering 97-125 (EYQEEEFDYESETESESEIESETEFETES) has biased composition (acidic residues). Residues 167–177 (PDASPSRAPPS) show a composition bias toward low complexity. Residues 182 to 198 (ESPRQGEEPEDKDPRDP) show a composition bias toward basic and acidic residues. A compositionally biased stretch (basic residues) spans 212 to 221 (QHRCKPKKPT).

The protein belongs to the NESP55 family. In terms of processing, binds keratan sulfate chains. May be proteolytically processed to give rise to a number of active peptides. Highly expressed in adrenal medulla and anterior and posterior pituitary. In the brain, detected in hypothalamus, hippocampus, caudate nucleus, thalamus and, in significantly lower amounts, in the cerebellum.

The protein localises to the cytoplasmic vesicle. The protein resides in the secretory vesicle. Its subcellular location is the secreted. The protein is Neuroendocrine secretory protein 55 of Bos taurus (Bovine).